The following is a 1746-amino-acid chain: Inactive tyrosine-protein kinase PEAK1 (1746 aa).

Residues 44–66 (KTNANHSNNHRIRNTGNFRPPVA) form a disordered region. The residue at position 281 (S281) is a Phosphoserine. Disordered regions lie at residues 334 to 411 (QSMV…KVPE) and 489 to 517 (LEGPVNSPKTKSSSSTPNSPVTSSSLTPG). Residues 338-349 (SSDSTSPDSSLT) show a composition bias toward low complexity. The segment covering 355–364 (ETASSLSQKI) has biased composition (polar residues). Positions 492–513 (PVNSPKTKSSSSTPNSPVTSSS) are enriched in low complexity. Residues S540, S572, and S587 each carry the phosphoserine modification. The interval 551–577 (ITSGTGPNVPPRKNCHKSAPTSPTATN) is disordered. A phosphotyrosine mark is found at Y635 and Y641. A Phosphoserine modification is found at S648. The residue at position 665 (Y665) is a Phosphotyrosine. Disordered stretches follow at residues 671 to 700 (ESKVPDNTTSKTTDCLQTKGFSNSTEHKRG), 713 to 764 (LNRG…EKAS), 802 to 920 (DADV…AADA), 1052 to 1102 (VTED…DPNP), and 1138 to 1158 (GKTDQEAPNASQPTPPPLPKK). Residues 675–694 (PDNTTSKTTDCLQTKGFSNS) show a composition bias toward polar residues. The segment covering 718–730 (SSPQRSYSSSHSS) has biased composition (low complexity). Composition is skewed to polar residues over residues 748–758 (TQESQMVGSSS) and 820–841 (LFTSQPSGEAEAPQTTDSPTTK). Residues S826 and S854 each carry the phosphoserine modification. Residues 864 to 874 (SEPPAPFPPPR) show a composition bias toward pro residues. The span at 889–902 (HFTNWTKPTSPTRS) shows a compositional bias: polar residues. At S898 the chain carries Phosphoserine. Composition is skewed to basic and acidic residues over residues 903 to 920 (TEAESVLHSEGSRRAADA), 1052 to 1062 (VTEDFSPRDPR), and 1084 to 1094 (ELEREDGKEDI). T1151 is modified (phosphothreonine). Y1188 carries the phosphotyrosine modification. A required for homodimerization region spans residues 1285 to 1311 (EVVGKIRSLHTDALKKLAVKCEDLFMA). The 363-residue stretch at 1313–1675 (QKDQLRFGVD…LLWGPREDLF (363 aa)) folds into the Protein kinase domain. The residue at position 1374 (S1374) is a Phosphoserine. Positions 1402–1456 (LLPWEDPDDPEKDEDDMEETEEDAKGETDGKNPKPCSEAASSQKENQGVMSKKQR) are disordered. The span at 1406 to 1423 (EDPDDPEKDEDDMEETEE) shows a compositional bias: acidic residues. Residues 1424–1433 (DAKGETDGKN) are compositionally biased toward basic and acidic residues. Positions 1440 to 1450 (AASSQKENQGV) are enriched in polar residues. The interval 1670 to 1743 (PREDLFQTFT…DSLSCIVKIL (74 aa)) is required for homodimerization.

It belongs to the protein kinase superfamily. As to quaternary structure, homodimer. Interacts with BCAR1 and CRK. Interacts with PRAG1. Interacts (when phosphorylated at Tyr-1188) with SHC1 (via PID domain). Found in a complex with PPP1CA, PPP1CC, SHC1 and PEAK1. Interacts (when phosphorylated at Tyr-635) with tensin TNS3 (when phosphorylated on the SH2 domain); TNS3 also interacts with integrins ITGB1, ITGB3 and ITGB5 and mediates their association with PEAK1. Interacts with RASAL2 and GRB2. Post-translationally, phosphorylated on tyrosine in a CSK-dependent manner in response to adhesion to fibronectin and to EGF stimulation. Phosphorylation at Tyr-665 by a Src family kinase controls subcellular localization to focal adhesion and focal adhesion dynamics. Phosphorylation at Tyr-1188 is essential for binding to SHC1. Phosphorylation at Tyr-635 promotes interaction with tensin TNS3.

It localises to the cytoplasm. The protein resides in the cytoskeleton. It is found in the cell junction. Its subcellular location is the focal adhesion. Functionally, probable catalytically inactive kinase. Scaffolding protein that regulates the cytoskeleton to control cell spreading and migration by modulating focal adhesion dynamics. Acts as a scaffold for mediating EGFR signaling. This Homo sapiens (Human) protein is Inactive tyrosine-protein kinase PEAK1 (PEAK1).